The sequence spans 73 residues: Translation initiation factor IF-1 (73 aa).

Positions 1 to 73 (MAKKDGVIEI…TRGRIVYRYK (73 aa)) constitute an S1-like domain.

This sequence belongs to the IF-1 family. Component of the 30S ribosomal translation pre-initiation complex which assembles on the 30S ribosome in the order IF-2 and IF-3, IF-1 and N-formylmethionyl-tRNA(fMet); mRNA recruitment can occur at any time during PIC assembly.

It localises to the cytoplasm. In terms of biological role, one of the essential components for the initiation of protein synthesis. Stabilizes the binding of IF-2 and IF-3 on the 30S subunit to which N-formylmethionyl-tRNA(fMet) subsequently binds. Helps modulate mRNA selection, yielding the 30S pre-initiation complex (PIC). Upon addition of the 50S ribosomal subunit IF-1, IF-2 and IF-3 are released leaving the mature 70S translation initiation complex. The sequence is that of Translation initiation factor IF-1 from Arthrobacter sp. (strain FB24).